A 376-amino-acid chain; its full sequence is Chaperone protein DnaJ (376 aa).

In terms of domain architecture, J spans D5–G72. The CR-type zinc finger occupies G136–Q214. Residues C149, C152, C166, C169, C188, C191, C202, and C205 each contribute to the Zn(2+) site. CXXCXGXG motif repeat units lie at residues C149 to G156, C166 to G173, C188 to G195, and C202 to G209. 2 disordered regions span residues D227–P246 and S352–S376. Residues G237–P246 show a composition bias toward gly residues. Residues W367 to S376 show a composition bias toward basic and acidic residues.

The protein belongs to the DnaJ family. In terms of assembly, homodimer. It depends on Zn(2+) as a cofactor.

The protein resides in the cytoplasm. Participates actively in the response to hyperosmotic and heat shock by preventing the aggregation of stress-denatured proteins and by disaggregating proteins, also in an autonomous, DnaK-independent fashion. Unfolded proteins bind initially to DnaJ; upon interaction with the DnaJ-bound protein, DnaK hydrolyzes its bound ATP, resulting in the formation of a stable complex. GrpE releases ADP from DnaK; ATP binding to DnaK triggers the release of the substrate protein, thus completing the reaction cycle. Several rounds of ATP-dependent interactions between DnaJ, DnaK and GrpE are required for fully efficient folding. Also involved, together with DnaK and GrpE, in the DNA replication of plasmids through activation of initiation proteins. The protein is Chaperone protein DnaJ of Acidovorax sp. (strain JS42).